The chain runs to 223 residues: MOB-like protein phocein (223 aa).

A disordered region spans residues 1–23 (MTAATENRTVRRNGPGTKRADWN). Positions 92, 97, 169, and 174 each coordinate Zn(2+).

Belongs to the MOB1/phocein family.

It localises to the cytoplasm. The protein localises to the perinuclear region. The protein resides in the membrane. Its subcellular location is the golgi apparatus. It is found in the golgi stack membrane. Its function is as follows. May play a role in membrane trafficking, specifically in membrane budding reactions. This chain is MOB-like protein phocein, found in Caenorhabditis elegans.